The primary structure comprises 133 residues: Phosphoribosyl-AMP cyclohydrolase (133 aa).

Asp-90 is a binding site for Mg(2+). Zn(2+) is bound at residue Cys-91. Positions 92 and 94 each coordinate Mg(2+). Residues Cys-107 and Cys-114 each contribute to the Zn(2+) site.

This sequence belongs to the PRA-CH family. Homodimer. It depends on Mg(2+) as a cofactor. Zn(2+) is required as a cofactor.

It localises to the cytoplasm. The catalysed reaction is 1-(5-phospho-beta-D-ribosyl)-5'-AMP + H2O = 1-(5-phospho-beta-D-ribosyl)-5-[(5-phospho-beta-D-ribosylamino)methylideneamino]imidazole-4-carboxamide. It functions in the pathway amino-acid biosynthesis; L-histidine biosynthesis; L-histidine from 5-phospho-alpha-D-ribose 1-diphosphate: step 3/9. Functionally, catalyzes the hydrolysis of the adenine ring of phosphoribosyl-AMP. This Streptomyces avermitilis (strain ATCC 31267 / DSM 46492 / JCM 5070 / NBRC 14893 / NCIMB 12804 / NRRL 8165 / MA-4680) protein is Phosphoribosyl-AMP cyclohydrolase.